The sequence spans 90 residues: Putative membrane protein insertion efficiency factor (90 aa).

The protein belongs to the UPF0161 family.

The protein resides in the cell membrane. Could be involved in insertion of integral membrane proteins into the membrane. This chain is Putative membrane protein insertion efficiency factor, found in Lactococcus lactis subsp. cremoris (strain SK11).